A 617-amino-acid polypeptide reads, in one-letter code: V-type proton ATPase catalytic subunit A (617 aa).

Phosphothreonine is present on Thr-136. 250-257 (GAFGCGKT) is a binding site for ATP. The residue at position 384 (Ser-384) is a Phosphoserine; by AMPK.

It belongs to the ATPase alpha/beta chains family. In terms of assembly, V-ATPase is a heteromultimeric enzyme made up of two complexes: the ATP-hydrolytic V1 complex and the proton translocation V0 complex. The V1 complex consists of three catalytic AB heterodimers that form a heterohexamer, three peripheral stalks each consisting of EG heterodimers, one central rotor including subunits D and F, and the regulatory subunits C and H. The proton translocation complex V0 consists of the proton transport subunit a, a ring of proteolipid subunits c9c'', rotary subunit d, subunits e and f, and the accessory subunits ATP6AP1/Ac45 and ATP6AP2/PRR. Interacts with the V0 complex V-ATPase subunit a4 ATP6V0A4. Interacts with WFS1. Interacts with alpha-crystallin B chain/CRYAB and with MTOR, forming a ternary complex. Phosphorylation at Ser-384 by AMPK down-regulates its enzyme activity.

It is found in the cytoplasm. It localises to the cytosol. The protein resides in the cytoplasmic vesicle. Its subcellular location is the secretory vesicle. The protein localises to the clathrin-coated vesicle membrane. It is found in the lysosome. It catalyses the reaction ATP + H2O + 4 H(+)(in) = ADP + phosphate + 5 H(+)(out). Its activity is regulated as follows. ATP hydrolysis occurs at the interface between the nucleotide-binding domains of subunits A and B. ATP hydrolysis triggers a conformational change in the subunits D and F, which induces a shift of subunit d. The c-ring is subsequently rotated and results in a continuous proton translocation across the membrane. Functionally, catalytic subunit of the V1 complex of vacuolar(H+)-ATPase (V-ATPase), a multisubunit enzyme composed of a peripheral complex (V1) that hydrolyzes ATP and a membrane integral complex (V0) that translocates protons. V-ATPase is responsible for acidifying and maintaining the pH of intracellular compartments and in some cell types, is targeted to the plasma membrane, where it is responsible for acidifying the extracellular environment. In aerobic conditions, involved in intracellular iron homeostasis, thus triggering the activity of Fe(2+) prolyl hydroxylase (PHD) enzymes, and leading to HIF1A hydroxylation and subsequent proteasomal degradation. May play a role in neurite development and synaptic connectivity. The protein is V-type proton ATPase catalytic subunit A (ATP6V1A) of Pongo abelii (Sumatran orangutan).